Consider the following 88-residue polypeptide: Alpha-conotoxin GVIIIB (88 aa).

The first 20 residues, 1-20, serve as a signal peptide directing secretion; sequence MMSKMGAMFVLLLLFTLASS. A propeptide spanning residues 21–43 is cleaved from the precursor; that stretch reads QQEGDVQARKTRPKSDFYRALPR. The residue at position 87 (threonine 87) is a Threonine amide.

This sequence belongs to the conotoxin S superfamily. Post-translationally, contains 5 disulfide bonds. The predominant peptide contains 2 hydroxyprolines, while 2 minor peptides contains 1 and 3 hydroxyprolines. Expressed by the venom duct.

The protein localises to the secreted. In terms of biological role, alpha-conotoxins act on postsynaptic membranes, they bind to the nicotinic acetylcholine receptors (nAChR) and thus inhibit them. This toxin shows high activity on alpha-9-alpha-10 (CHRNA9-CHRNA10) (IC(50)=9.79 nM). It also shows weak activity on alpha-3-beta-2 (CHRNA3-CHRNB2) (IC(50)~1 uM), alpha-6/alpha-3-beta-2-beta-3 (CHRNA6/CHRNA3-CHRNB2-CHRNB3) (IC(50)~1 uM). The toxin binds to the same or overlapping binding sites than conotoxin RgIA (AC P0C1D0). This Conus geographus (Geography cone) protein is Alpha-conotoxin GVIIIB.